A 518-amino-acid chain; its full sequence is Putative ribose/galactose/methyl galactoside import ATP-binding protein (518 aa).

The tract at residues 1 to 22 (MSIAVLDRPMSRQDTPSASSVP) is disordered. Residues 12-22 (RQDTPSASSVP) show a composition bias toward polar residues. 2 consecutive ABC transporter domains span residues 29 to 265 (LEVR…VGRE) and 275 to 515 (VPIG…VMEL). An ATP-binding site is contributed by 61–68 (GENGAGKS).

It belongs to the ABC transporter superfamily. Carbohydrate importer 2 (CUT2) (TC 3.A.1.2) family.

It localises to the cell inner membrane. The enzyme catalyses D-ribose(out) + ATP + H2O = D-ribose(in) + ADP + phosphate + H(+). It carries out the reaction D-galactose(out) + ATP + H2O = D-galactose(in) + ADP + phosphate + H(+). In terms of biological role, part of an ABC transporter complex involved in carbohydrate import. Could be involved in ribose, galactose and/or methyl galactoside import. Responsible for energy coupling to the transport system. The chain is Putative ribose/galactose/methyl galactoside import ATP-binding protein from Ralstonia nicotianae (strain ATCC BAA-1114 / GMI1000) (Ralstonia solanacearum).